We begin with the raw amino-acid sequence, 912 residues long: MSRIQYVDQVDQVELDQQQQPGSSSTVSGSTPPLQISPHGSPSLQQSQRLGKHLSKSASELNGHDCHLSESPHISPKRAKSAVAQQLAGVSSGGVASGVGVLQKTHGFFNNLRHRWSRAKSKDRLGRKSPSDFLEESTDYAADYSSEGSSVTHSPRHRSTTIGGSPLAREFRATAKMAQVIQRFGGSMEGRIDEHPENGSAGCSPPELSTQQQLEALQANELRRKREAQLRQFVFFQLRVHLKSGSDLVAMDKNGLSDPYVKFKVGGRLLHKSRTIHRDLNPVWDEVFIVPIEDPFQPIIVKVFDYDWGLQDDFMGSAKLDLTQLELGKAEDIHLQLCDSSGNGGSGLGEILINLTLWPRSQEDKEMHFQRNSKLAESSKRLKSQIWSSVVTILLVKAKDLPLAEDGSKLNDTHFKFRLGNEKYKSKSSWTERWLEQFDLHLFDEDQNLEIALWNRNTLYGKAIIDLSVFQRENTHGIWKPLEDCPGEVHLMLTISGTTALETISDLKAFKEDPREAQLLRERYKFLRCLQNLRDVGHLTVKVFGATGLAAADIGGKSDPFCVLELGNARLQTQTEYKTLTPNWNKIFTFNVKDITQVLEITVFDEDRDHRVEFLGKLVIPLLRIKSGVKRWYTLKDKNLCVRAKGNSPQIQLELTVVWSEIRAVCRALQPKEEKLIQQEAKFKRQLFLRNVNRLKEIIMDILDAARYVQSCFEWESPVRSSIAFVFWIVACVYGDLETVPLVLLLIILKNWLVRLITGTTDAAAHYDYEYDEDDDDDKEKEEKKSIKERLQAIQEVSQTVQNTIGYLASLGESTINTFNFSVPELTWLAVVLLLGAILVLHFVPLRWLLLFWGLMKFSRRLLRPNTIPNNELLDFLSRVPDNEEINQYRELPPSAPTDQTRNNPKKKLKGS.

Positions 1-33 are enriched in low complexity; the sequence is MSRIQYVDQVDQVELDQQQQPGSSSTVSGSTPP. Disordered regions lie at residues 1-80 and 145-165; these read MSRI…KRAK and SSEGSSVTHSPRHRSTTIGGS. Positions 38 to 49 are enriched in polar residues; it reads PHGSPSLQQSQR. C2 domains are found at residues 218-337, 371-493, and 522-637; these read QANE…HLQL, RNSK…HLML, and ERYK…TLKD. Ca(2+) contacts are provided by Asp252, Asp258, Asp305, Asp307, and Asp313. Residues Asp553, Asp559, Asp605, and Asp607 each contribute to the Ca(2+) site. The next 2 membrane-spanning stretches (helical) occupy residues 729–749 and 826–846; these read IVACVYGDLETVPLVLLLIIL and LTWLAVVLLLGAILVLHFVPL. The tract at residues 887–912 is disordered; the sequence is NQYRELPPSAPTDQTRNNPKKKLKGS.

The cofactor is Ca(2+). In terms of tissue distribution, motor neurons (at protein level).

The protein localises to the endoplasmic reticulum membrane. Its function is as follows. Calcium sensor which is essential for the stabilization of normal baseline neurotransmitter release and for the induction and long-term maintenance of presynaptic homeostatic plasticity. The protein is Multiple C2 and transmembrane domain-containing protein of Drosophila melanogaster (Fruit fly).